A 181-amino-acid polypeptide reads, in one-letter code: Type II secretion system protein H (181 aa).

Positions 1–5 (MRQRG) are cleaved as a propeptide — leader sequence. An N-methylphenylalanine modification is found at F6. The helical transmembrane segment at 6-29 (FTLLEIMLVVLLAGVAATLVMMAI) threads the bilayer.

The protein belongs to the GSP H family. Type II secretion is composed of four main components: the outer membrane complex, the inner membrane complex, the cytoplasmic secretion ATPase and the periplasm-spanning pseudopilus. Interacts with core component OutG. In terms of processing, cleaved by prepilin peptidase. Methylated by prepilin peptidase at the amino group of the N-terminal phenylalanine once the leader sequence is cleaved by prepilin peptidase.

It is found in the cell inner membrane. Functionally, component of the type II secretion system required for the energy-dependent secretion of extracellular factors such as proteases and toxins from the periplasm. Part of the pseudopilus tip complex that is critical for the recognition and binding of secretion substrates. The protein is Type II secretion system protein H (outH) of Dickeya chrysanthemi (Pectobacterium chrysanthemi).